A 100-amino-acid chain; its full sequence is NADH-quinone oxidoreductase subunit K 2 (100 aa).

3 helical membrane passes run 4 to 24 (LWWYIVLGVVLFVIGAAGVLI), 28 to 48 (ILVVLMSLELLLNSVNINFIA), and 60 to 80 (IFAIFVIAITAAEVAVALGIL).

Belongs to the complex I subunit 4L family. NDH-1 is composed of 14 different subunits. Subunits NuoA, H, J, K, L, M, N constitute the membrane sector of the complex.

The protein localises to the cell inner membrane. It carries out the reaction a quinone + NADH + 5 H(+)(in) = a quinol + NAD(+) + 4 H(+)(out). In terms of biological role, NDH-1 shuttles electrons from NADH, via FMN and iron-sulfur (Fe-S) centers, to quinones in the respiratory chain. The immediate electron acceptor for the enzyme in this species is believed to be ubiquinone. Couples the redox reaction to proton translocation (for every two electrons transferred, four hydrogen ions are translocated across the cytoplasmic membrane), and thus conserves the redox energy in a proton gradient. This chain is NADH-quinone oxidoreductase subunit K 2, found in Rhizobium etli (strain ATCC 51251 / DSM 11541 / JCM 21823 / NBRC 15573 / CFN 42).